A 554-amino-acid polypeptide reads, in one-letter code: Glucose-6-phosphate isomerase (554 aa).

Glu-359 serves as the catalytic Proton donor. Active-site residues include His-390 and Lys-518.

Belongs to the GPI family.

It is found in the cytoplasm. The enzyme catalyses alpha-D-glucose 6-phosphate = beta-D-fructose 6-phosphate. Its pathway is carbohydrate biosynthesis; gluconeogenesis. It functions in the pathway carbohydrate degradation; glycolysis; D-glyceraldehyde 3-phosphate and glycerone phosphate from D-glucose: step 2/4. In terms of biological role, catalyzes the reversible isomerization of glucose-6-phosphate to fructose-6-phosphate. In Pseudomonas putida (strain GB-1), this protein is Glucose-6-phosphate isomerase.